The chain runs to 526 residues: MNTSASPVPGLFTLVLHTHLPWLAHHGRWPVGEEWLYQSWAAAYLPLLQVLAALADENRHRLITLGMTPVVNAQLDDPYCLNGVHHWLANWQLRAEEAASVRYARQSKSADYPSCTPEALRAFGIRECADAARALDNFATRWRHGGSPLLRGLIDAGTVELLGGPLAHPFQPLLAPRLREFALREGLADAQLRLAHRPKGIWAPECAYAPGMEVDYATAGVSHFMVDGPSLHGDTALGRPVGKTDVVAFGRDLQVSYRVWSPKSGYPGHAAYRDFHTYDHLTGLKPARVTGRNVPSEQKAPYDPERADRAVDVHVADFVDVVRNRLLSESERIGRPAHVIAAFDTELFGHWWYEGPTWLQRVLRALPAAGVRVGTLSDAIADGFVGDPVELPPSSWGSGKDWQVWSGAKVADLVQLNSEVVDTALTTIDKALAQTASLDGPLPRDHVADQILRETLLTVSSDWPFMVSKDSAADYARYRAHLHAHATREIAGALAAGRRDTARRLAEGWNRADGLFGALDARRLPK.

The Nucleophile role is filled by Glu-205. Substrate is bound by residues Arg-251 and Gly-268. Asp-344 serves as the catalytic Proton donor. Substrate-binding residues include Trp-396 and Asp-462.

Belongs to the glycosyl hydrolase 57 family.

It catalyses the reaction Transfers a segment of a (1-&gt;4)-alpha-D-glucan chain to a primary hydroxy group in a similar glucan chain.. Functionally, catalyzes the formation of branch points in alpha-glucans by cleavage of an alpha-1,4 glycosidic bond and subsequent transfer of the cleaved-off oligosaccharide to a new alpha-1,6 position. Is probably involved in the biosynthesis of 6-O-methylglucosyl lipopolysaccharides (MGLP). The protein is Probable 1,4-alpha-glucan branching enzyme MT3115 of Mycobacterium tuberculosis (strain CDC 1551 / Oshkosh).